The chain runs to 355 residues: Guanine nucleotide-binding protein G(i) subunit alpha-2 (355 aa).

A lipid anchor (N-myristoyl glycine) is attached at Gly2. Cys3 carries S-palmitoyl cysteine lipidation. Positions 32-355 (REVKLLLLGA…KNNLKDCGLF (324 aa)) constitute a G-alpha domain. Residues 35-48 (KLLLLGAGESGKST) are G1 motif. GTP-binding positions include 40 to 47 (GAGESGKS), 176 to 182 (LRTRVKT), 201 to 205 (DVGGQ), 270 to 273 (NKKD), and Ala327. Ser47 and Thr182 together coordinate Mg(2+). Residues 174-182 (DVLRTRVKT) form a G2 motif region. Residues 197-206 (FKMFDVGGQR) are G3 motif. Residues 266–273 (ILFLNKKD) form a G4 motif region. Positions 325–330 (TCATDT) are G5 motif.

This sequence belongs to the G-alpha family. G(i/o/t/z) subfamily. In terms of assembly, g proteins are composed of 3 units; alpha, beta and gamma. The alpha chain contains the guanine nucleotide binding site. In this context, interacts with GNB2. Interacts with UNC5B. Interacts with GPSM1. Interacts with RGS12 and RGS14. Interacts (inactive GDP-bound form) with NUCB1 (via GBA motif); the interaction leads to activation of GNAI3. Interacts (inactive GDP-bound form) with CCDC88C/DAPLE (via GBA motif). Interacts (inactive GDP-bound form) with CCDC8A/GIV (via GBA motif). Interacts with CXCR1 and CXCR2.

Its subcellular location is the cytoplasm. The protein localises to the cytoskeleton. It localises to the microtubule organizing center. The protein resides in the centrosome. It is found in the cell membrane. Its subcellular location is the membrane. Functionally, guanine nucleotide-binding proteins (G proteins) are involved as modulators or transducers in various transmembrane signaling systems. The G(i) proteins are involved in hormonal regulation of adenylate cyclase: they inhibit the cyclase in response to beta-adrenergic stimuli. May play a role in cell division. The chain is Guanine nucleotide-binding protein G(i) subunit alpha-2 (Gnai2) from Mus musculus (Mouse).